Here is a 240-residue protein sequence, read N- to C-terminus: Citrate synthase-lysine N-methyltransferase CSKMT, mitochondrial (240 aa).

A mitochondrion-targeting transit peptide spans 1-21 (MAALRRMLHLPRLTMGTCRPF).

The protein belongs to the methyltransferase superfamily.

The protein resides in the mitochondrion. The catalysed reaction is L-lysyl-[citrate synthase] + S-adenosyl-L-methionine = N(6)-methyl-L-lysyl-[citrate synthase] + S-adenosyl-L-homocysteine + H(+). It carries out the reaction N(6)-methyl-L-lysyl-[citrate synthase] + S-adenosyl-L-methionine = N(6),N(6)-dimethyl-L-lysyl-[citrate synthase] + S-adenosyl-L-homocysteine + H(+). The enzyme catalyses N(6),N(6)-dimethyl-L-lysyl-[citrate synthase] + S-adenosyl-L-methionine = N(6),N(6),N(6)-trimethyl-L-lysyl-[citrate synthase] + S-adenosyl-L-homocysteine + H(+). Its activity is regulated as follows. Citrate synthase-lysine methyltransferase activity is inhibited by S-adenosylhomocysteine (AdoHcy) and oxaloacetate (OAA). Its function is as follows. Protein-lysine methyltransferase that selectively trimethylates citrate synthase (CS) in mitochondria. Seems to conduct trimethylation in a highly distributive manner rather than in a processive manner, and thus introduces a single methyl group per binding event. The sequence is that of Citrate synthase-lysine N-methyltransferase CSKMT, mitochondrial from Pongo abelii (Sumatran orangutan).